Here is a 68-residue protein sequence, read N- to C-terminus: MRLLILFLAVVTLLSLAGPGSAEVRRRRRRPPCEDVNGQCQPRGNPCLRLRGACPRGSRCCMPTVAAH.

The signal sequence occupies residues 1–24 (MRLLILFLAVVTLLSLAGPGSAEV). 3 disulfides stabilise this stretch: Cys-33-Cys-60, Cys-40-Cys-54, and Cys-47-Cys-61.

Highly expressed in intestine, liver and spleen and expressed at lower levels in brain, kidney, lung, testis and venom gland.

Its subcellular location is the secreted. Its function is as follows. Potent antimicrobial peptide that displays activity against S.aureus and P.aeruginosa. Does not inhibit growth of E.coli. The chain is Venom-like beta-defensin from Ornithorhynchus anatinus (Duckbill platypus).